The sequence spans 330 residues: Trans-1,2-dihydrobenzene-1,2-diol dehydrogenase (330 aa).

Belongs to the Gfo/Idh/MocA family. As to quaternary structure, homodimer.

It carries out the reaction (1R,2R)-1,2-dihydrobenzene-1,2-diol + NADP(+) = catechol + NADPH + H(+). It catalyses the reaction D-xylose + NADP(+) = D-xylono-1,5-lactone + NADPH + H(+). This is Trans-1,2-dihydrobenzene-1,2-diol dehydrogenase (dhdh) from Xenopus laevis (African clawed frog).